The following is a 745-amino-acid chain: Exocyst complex component 3 (745 aa).

Lys28 carries the post-translational modification N6-acetyllysine.

Belongs to the SEC6 family. The exocyst complex is composed of EXOC1, EXOC2, EXOC3, EXOC4, EXOC5, EXOC6, EXOC7 and EXOC8. Interacts with EXOC3L1. Interacts with BIRC6/bruce. Interacts with MYRIP. Interacts with SLC6A9.

The protein localises to the cytoplasm. It is found in the perinuclear region. It localises to the cell projection. The protein resides in the growth cone. Its subcellular location is the neuron projection. The protein localises to the midbody. It is found in the golgi apparatus. In terms of biological role, component of the exocyst complex involved in the docking of exocytic vesicles with fusion sites on the plasma membrane. The chain is Exocyst complex component 3 (EXOC3) from Bos taurus (Bovine).